Consider the following 454-residue polypeptide: Cobyrinate a,c-diamide synthase (454 aa).

The GATase cobBQ-type domain maps to 244–435 (KIAVAYDSAF…VHIHFLSNIA (192 aa)). C327 functions as the Nucleophile in the catalytic mechanism.

This sequence belongs to the CobB/CbiA family. Mg(2+) is required as a cofactor.

The enzyme catalyses cob(II)yrinate + 2 L-glutamine + 2 ATP + 2 H2O = cob(II)yrinate a,c diamide + 2 L-glutamate + 2 ADP + 2 phosphate + 2 H(+). It functions in the pathway cofactor biosynthesis; adenosylcobalamin biosynthesis; cob(II)yrinate a,c-diamide from sirohydrochlorin (anaerobic route): step 10/10. Catalyzes the ATP-dependent amidation of the two carboxylate groups at positions a and c of cobyrinate, using either L-glutamine or ammonia as the nitrogen source. This Thermoplasma volcanium (strain ATCC 51530 / DSM 4299 / JCM 9571 / NBRC 15438 / GSS1) protein is Cobyrinate a,c-diamide synthase.